The primary structure comprises 195 residues: Probable GTP-binding protein EngB (195 aa).

Residues 22–194 (LKGEVAFVGR…LDLISTLLKE (173 aa)) enclose the EngB-type G domain. GTP-binding positions include 30–37 (GRSNVGKS), 56–60 (GKTRS), 74–77 (DLPG), 141–144 (TKMD), and 173–175 (TSS). Mg(2+)-binding residues include S37 and T58.

This sequence belongs to the TRAFAC class TrmE-Era-EngA-EngB-Septin-like GTPase superfamily. EngB GTPase family. Mg(2+) serves as cofactor.

Necessary for normal cell division and for the maintenance of normal septation. The protein is Probable GTP-binding protein EngB of Thermotoga sp. (strain RQ2).